The following is a 468-amino-acid chain: Uronate isomerase (468 aa).

Belongs to the metallo-dependent hydrolases superfamily. Uronate isomerase family.

The enzyme catalyses D-glucuronate = D-fructuronate. It catalyses the reaction aldehydo-D-galacturonate = keto-D-tagaturonate. It functions in the pathway carbohydrate metabolism; pentose and glucuronate interconversion. This chain is Uronate isomerase, found in Bacteroides thetaiotaomicron (strain ATCC 29148 / DSM 2079 / JCM 5827 / CCUG 10774 / NCTC 10582 / VPI-5482 / E50).